The following is a 273-amino-acid chain: 4-hydroxy-tetrahydrodipicolinate reductase (273 aa).

NAD(+) is bound by residues 12–17 (GAGGRM) and E38. R39 serves as a coordination point for NADP(+). NAD(+) is bound by residues 102–104 (GTT) and 126–129 (AANF). H159 serves as the catalytic Proton donor/acceptor. (S)-2,3,4,5-tetrahydrodipicolinate is bound at residue H160. K163 functions as the Proton donor in the catalytic mechanism. Position 169–170 (169–170 (GT)) interacts with (S)-2,3,4,5-tetrahydrodipicolinate.

This sequence belongs to the DapB family. Homotetramer.

The protein localises to the cytoplasm. It catalyses the reaction (S)-2,3,4,5-tetrahydrodipicolinate + NAD(+) + H2O = (2S,4S)-4-hydroxy-2,3,4,5-tetrahydrodipicolinate + NADH + H(+). The enzyme catalyses (S)-2,3,4,5-tetrahydrodipicolinate + NADP(+) + H2O = (2S,4S)-4-hydroxy-2,3,4,5-tetrahydrodipicolinate + NADPH + H(+). It participates in amino-acid biosynthesis; L-lysine biosynthesis via DAP pathway; (S)-tetrahydrodipicolinate from L-aspartate: step 4/4. Its function is as follows. Catalyzes the conversion of 4-hydroxy-tetrahydrodipicolinate (HTPA) to tetrahydrodipicolinate. This Salmonella agona (strain SL483) protein is 4-hydroxy-tetrahydrodipicolinate reductase.